Reading from the N-terminus, the 286-residue chain is Protease HtpX homolog (286 aa).

Helical transmembrane passes span 6-26 and 28-48; these read TCFL…YVGG and QGMI…YFFS. Zn(2+) is bound at residue H130. E131 is an active-site residue. H134 is a binding site for Zn(2+). 2 helical membrane-spanning segments follow: residues 140-160 and 178-198; these read ILTG…ANFA and AIML…QMAI. E203 provides a ligand contact to Zn(2+).

The protein belongs to the peptidase M48B family. It depends on Zn(2+) as a cofactor.

It is found in the cell inner membrane. The sequence is that of Protease HtpX homolog from Campylobacter curvus (strain 525.92).